Here is a 209-residue protein sequence, read N- to C-terminus: Large ribosomal subunit protein uL3 (209 aa).

The disordered stretch occupies residues 133-153 (THGNSLSHRVPGSIGQNQTPG). The residue at position 150 (glutamine 150) is an N5-methylglutamine.

Belongs to the universal ribosomal protein uL3 family. As to quaternary structure, part of the 50S ribosomal subunit. Forms a cluster with proteins L14 and L19. Methylated by PrmB.

In terms of biological role, one of the primary rRNA binding proteins, it binds directly near the 3'-end of the 23S rRNA, where it nucleates assembly of the 50S subunit. This is Large ribosomal subunit protein uL3 from Serratia proteamaculans (strain 568).